The following is a 33-amino-acid chain: Photosystem II reaction center protein Psb30 (33 aa).

A helical membrane pass occupies residues Ile5–Leu25.

The protein belongs to the Psb30/Ycf12 family. In terms of assembly, PSII is composed of 1 copy each of membrane proteins PsbA, PsbB, PsbC, PsbD, PsbE, PsbF, PsbH, PsbI, PsbJ, PsbK, PsbL, PsbM, PsbT, PsbX, PsbY, PsbZ, Psb30/Ycf12, peripheral proteins of the oxygen-evolving complex and a large number of cofactors. It forms dimeric complexes.

Its subcellular location is the plastid. The protein localises to the chloroplast thylakoid membrane. Its function is as follows. A core subunit of photosystem II (PSII), probably helps stabilize the reaction center. In Oedogonium cardiacum (Filamentous green alga), this protein is Photosystem II reaction center protein Psb30.